Consider the following 110-residue polypeptide: Putative UPF0377 protein YKL223W (110 aa).

It belongs to the UPF0377 family.

This chain is Putative UPF0377 protein YKL223W, found in Saccharomyces cerevisiae (strain ATCC 204508 / S288c) (Baker's yeast).